We begin with the raw amino-acid sequence, 249 residues long: Bacillaene synthase decarboxylase PksI (249 aa).

The active site involves His-230.

This sequence belongs to the enoyl-CoA hydratase/isomerase family. In terms of assembly, homotrimer. Does not form a heterotrimeric complex with PksH.

The protein resides in the cytoplasm. Its pathway is antibiotic biosynthesis; bacillaene biosynthesis. In terms of biological role, involved in some intermediate steps for the synthesis of the antibiotic polyketide bacillaene which is involved in secondary metabolism. Catalyzes the decarboxylation of the 3-methylglutaconyl group tethered to PksL to a 3-methylcrotonyl moiety. The chain is Bacillaene synthase decarboxylase PksI (pksI) from Bacillus subtilis (strain 168).